Consider the following 657-residue polypeptide: MSSSNDHVLVPMSQRNNNGLPRTNSRAVRTLAEGDVLSFHHITYRVKVKSGFLVRKTVEKEILSDINGIMKPGLNAILGPTGGGKSSLLDVLAARKDPKGLSGDVLINGAPQPAHFKCCSGYVVQDDVVMGTLTVRENLQFSAALRLPTTMKNHEKNERINTIIKELGLEKVADSKVGTQFIRGISGGERKRTSIGMELITDPSILFLDEPTTGLDSSTANAVLLLLKRMSKQGRTIIFSIHQPRYSIFKLFDSLTLLASGKLVFHGPAQKALEYFASAGYHCEPYNNPADFFLDVINGDSSAVMLNREEQDNEANKTEEPSKGEKPVIENLSEFYINSAIYGETKAELDQLPGAQEKKGTSAFKEPVYVTSFCHQLRWIARRSFKNLLGNPQASVAQLIVTVILGLIIGAIYFDLKYDAAGMQNRAGVLFFLTTNQCFSSVSAVELFVVEKKLFIHEYISGYYRVSSYFFGKVMSDLLPMRFLPSVIFTCVLYFMLGLKKTVDAFFIMMFTLIMVAYTASSMALAIATGQSVVSVATLLMTIAFVFMMLFSGLLVNLRTIGPWLSWLQYFSIPRYGFTALQYNEFLGQEFCPGFNVTDNSTCVNSYAICTGNEYLINQGIELSPWGLWKNHVALACMIIIFLTIAYLKLLFLKKYS.

Residues methionine 1–asparagine 24 form a disordered region. Residues methionine 1–glutamine 393 lie on the Cytoplasmic side of the membrane. The segment covering serine 13–asparagine 24 has biased composition (polar residues). Positions valine 48–proline 285 constitute an ABC transporter domain. Residues glycine 79–serine 86, arginine 183–glutamate 189, glutamate 210, and histidine 242 contribute to the ATP site. In terms of domain architecture, ABC transmembrane type-2 spans leucine 389–leucine 653. The chain crosses the membrane as a helical span at residues alanine 394–phenylalanine 414. Topologically, residues aspartate 415–glycine 428 are extracellular. Residues valine 429–valine 449 traverse the membrane as a helical segment. The Cytoplasmic portion of the chain corresponds to valine 450–aspartate 477. A helical membrane pass occupies residues leucine 478–glycine 498. The Extracellular segment spans residues leucine 499 to phenylalanine 506. Residues phenylalanine 507–isoleucine 527 form a helical membrane-spanning segment. The Cytoplasmic portion of the chain corresponds to alanine 528–serine 535. The chain crosses the membrane as a helical span at residues valine 536–valine 556. The Extracellular portion of the chain corresponds to asparagine 557–histidine 632. A disulfide bridge links cysteine 592 with cysteine 610. Asparagine 596 and asparagine 600 each carry an N-linked (GlcNAc...) asparagine glycan. The chain crosses the membrane as a helical span at residues valine 633 to leucine 653. Residues lysine 654–serine 657 lie on the Cytoplasmic side of the membrane.

It belongs to the ABC transporter superfamily. ABCG family. Eye pigment precursor importer (TC 3.A.1.204) subfamily. Homodimer; disulfide-linked. The minimal functional unit is a homodimer, but the major oligomeric form in plasma membrane is a homotetramer with possibility of higher order oligomerization up to homododecamers. Post-translationally, N-glycosylated. Glycosylation-deficient ABCG2 is normally expressed and functional. In terms of processing, phosphorylated. Phosphorylation may regulate the localization to the plasma membrane, the homooligomerization and therefore, the activity of the transporter. Highly expressed in kidney. Lower expression in liver, colon, heart, spleen, and placenta. Expressed in mammary gland. Expressed in intestinal villi and renal proximal tubules, hepatic bile canalicular membranes, and placental labyrinth cells (at protein level).

It is found in the cell membrane. The protein localises to the apical cell membrane. The protein resides in the mitochondrion membrane. It carries out the reaction ATP + H2O + xenobioticSide 1 = ADP + phosphate + xenobioticSide 2.. It catalyses the reaction riboflavin(in) + ATP + H2O = riboflavin(out) + ADP + phosphate + H(+). The catalysed reaction is pheophorbide a(in) + ATP + H2O = pheophorbide a(out) + ADP + phosphate + H(+). The enzyme catalyses urate(in) + ATP + H2O = urate(out) + ADP + phosphate + H(+). It carries out the reaction indoxyl sulfate(in) + ATP + H2O = indoxyl sulfate(out) + ADP + phosphate + H(+). It catalyses the reaction sphing-4-enine 1-phosphate(in) + ATP + H2O = sphing-4-enine 1-phosphate(out) + ADP + phosphate + H(+). The catalysed reaction is estrone 3-sulfate(in) + ATP + H2O = estrone 3-sulfate(out) + ADP + phosphate + H(+). The enzyme catalyses dehydroepiandrosterone 3-sulfate(in) + ATP + H2O = dehydroepiandrosterone 3-sulfate(out) + ADP + phosphate + H(+). It carries out the reaction 4-methylumbelliferone sulfate(in) + ATP + H2O = 4-methylumbelliferone sulfate(out) + ADP + phosphate + H(+). It catalyses the reaction 5,7-dimethyl-2-methylamino-4-(3-pyridylmethyl)-1,3-benzothiazol-6-yl beta-D-glucuronate(in) + ATP + H2O = 5,7-dimethyl-2-methylamino-4-(3-pyridylmethyl)-1,3-benzothiazol-6-yl beta-D-glucuronate(out) + ADP + phosphate + H(+). The catalysed reaction is 4-methylumbelliferone beta-D-glucuronate(in) + ATP + H2O = 4-methylumbelliferone beta-D-glucuronate(out) + ADP + phosphate + H(+). The enzyme catalyses 5,7-dimethyl-2-methylamino-4-(3-pyridylmethyl)-1,3-benzothiazol-6-yl sulfate(in) + ATP + H2O = 5,7-dimethyl-2-methylamino-4-(3-pyridylmethyl)-1,3-benzothiazol-6-yl sulfate(out) + ADP + phosphate + H(+). It carries out the reaction 17beta-estradiol 17-O-(beta-D-glucuronate)(in) + ATP + H2O = 17beta-estradiol 17-O-(beta-D-glucuronate)(out) + ADP + phosphate + H(+). It catalyses the reaction methotrexate(in) + ATP + H2O = methotrexate(out) + ADP + phosphate + H(+). The catalysed reaction is itaconate(in) + ATP + H2O = itaconate(out) + ADP + phosphate + H(+). With respect to regulation, specifically inhibited by the fungal toxin fumitremorgin C and Ko143. In terms of biological role, broad substrate specificity ATP-dependent transporter of the ATP-binding cassette (ABC) family that actively extrudes a wide variety of physiological compounds, dietary toxins and xenobiotics from cells. Involved in porphyrin homeostasis, mediating the export of protoporphyrin IX (PPIX) from both mitochondria to cytosol and cytosol to extracellular space, it also functions in the cellular export of heme. Also mediates the efflux of sphingosine-1-P from cells. Acts as a urate exporter functioning in both renal and extrarenal urate excretion. In kidney, it also functions as a physiological exporter of the uremic toxin indoxyl sulfate. Also involved in the excretion of steroids like estrone 3-sulfate/E1S, 3beta-sulfooxy-androst-5-en-17-one/DHEAS, and other sulfate conjugates. Mediates the secretion of the riboflavin and biotin vitamins into milk. Extrudes pheophorbide a, a phototoxic porphyrin catabolite of chlorophyll, reducing its bioavailability. Plays an important role in the exclusion of xenobiotics from the brain. It confers to cells a resistance to multiple drugs and other xenobiotics including mitoxantrone, pheophorbide, camptothecin, methotrexate, azidothymidine, and the anthracyclines daunorubicin and doxorubicin, through the control of their efflux. In placenta, it limits the penetration of drugs from the maternal plasma into the fetus. May play a role in early stem cell self-renewal by blocking differentiation. In inflammatory macrophages, exports itaconate from the cytosol to the extracellular compartment and limits the activation of TFEB-dependent lysosome biogenesis involved in antibacterial innate immune response. This Mus musculus (Mouse) protein is Broad substrate specificity ATP-binding cassette transporter ABCG2 (Abcg2).